A 92-amino-acid polypeptide reads, in one-letter code: MTRSLKKGPFIANHLLKKVHILNLEAQKKVILTWSRGSTIIPSMIGHTIAIHNGREHIPIFITDQMVGHKLGEFSATRTFRGHAKNDKKSRR.

It belongs to the universal ribosomal protein uS19 family.

The protein resides in the plastid. It is found in the chloroplast. Protein S19 forms a complex with S13 that binds strongly to the 16S ribosomal RNA. The polypeptide is Small ribosomal subunit protein uS19c (Chara vulgaris (Common stonewort)).